A 352-amino-acid polypeptide reads, in one-letter code: Thiamine-monophosphate kinase (352 aa).

The Mg(2+) site is built by Asp58, Thr73, and Asp75. His82 lines the substrate pocket. Residues Asp103 and Asp151 each contribute to the Mg(2+) site. ATP contacts are provided by residues 150–151 (GD) and Arg177. Asp239 is a Mg(2+) binding site. Ser241 contacts ATP. Asp242 contributes to the Mg(2+) binding site. Positions 294 and 349 each coordinate substrate.

It belongs to the thiamine-monophosphate kinase family.

It carries out the reaction thiamine phosphate + ATP = thiamine diphosphate + ADP. Its pathway is cofactor biosynthesis; thiamine diphosphate biosynthesis; thiamine diphosphate from thiamine phosphate: step 1/1. Functionally, catalyzes the ATP-dependent phosphorylation of thiamine-monophosphate (TMP) to form thiamine-pyrophosphate (TPP), the active form of vitamin B1. This is Thiamine-monophosphate kinase from Caulobacter vibrioides (strain ATCC 19089 / CIP 103742 / CB 15) (Caulobacter crescentus).